The following is a 550-amino-acid chain: DNA gyrase subunit A (550 aa).

In terms of domain architecture, Topo IIA-type catalytic spans 1–550; it reads FRPDRSHAKS…GMATNIPPHN (550 aa). Tyr-66 acts as the O-(5'-phospho-DNA)-tyrosine intermediate in catalysis. One can recognise a DOD-type homing endonuclease domain in the interval 192-332; it reads LLGAFISEGF…VQQMLLEFGV (141 aa).

Belongs to the type II topoisomerase GyrA/ParC subunit family. In terms of assembly, heterotetramer, composed of two GyrA and two GyrB chains. In the heterotetramer, GyrA contains the active site tyrosine that forms a transient covalent intermediate with DNA, while GyrB binds cofactors and catalyzes ATP hydrolysis. In terms of processing, this protein undergoes a protein self splicing that involves a post-translational excision of the intervening region (intein) followed by peptide ligation.

Its subcellular location is the cytoplasm. The catalysed reaction is ATP-dependent breakage, passage and rejoining of double-stranded DNA.. A type II topoisomerase that negatively supercoils closed circular double-stranded (ds) DNA in an ATP-dependent manner to modulate DNA topology and maintain chromosomes in an underwound state. Negative supercoiling favors strand separation, and DNA replication, transcription, recombination and repair, all of which involve strand separation. Also able to catalyze the interconversion of other topological isomers of dsDNA rings, including catenanes and knotted rings. Type II topoisomerases break and join 2 DNA strands simultaneously in an ATP-dependent manner. The sequence is that of DNA gyrase subunit A (gyrA) from Mycobacterium gordonae.